Reading from the N-terminus, the 86-residue chain is Progonadoliberin-2 (86 aa).

The signal sequence occupies residues 1-24; it reads MVSVCRLLLVAALLLCLQAQLSFS. Glutamine 25 is modified (pyrrolidone carboxylic acid). Glycine amide is present on glycine 34.

The protein belongs to the GnRH family.

Its subcellular location is the secreted. In terms of biological role, stimulates the secretion of gonadotropins. The chain is Progonadoliberin-2 (gnrh2) from Clarias gariepinus (North African catfish).